A 360-amino-acid chain; its full sequence is MTLTALGMPALRSRTNGIADPRVVPTTGPLVDTFGRVANDLRVSLTDRCNLRCSYCMPERGLRWLPGEQLLRPDELARLIHIAVTRLGVTSVRFTGGEPLLAHHLDEVVAATARLRPRPEISLTTNGVGLARRAGALAEAGLDRVNVSLDSIDRAHFAAITRRDRLAHVLAGLAAAKAAGLTPVKVNAVLDPTTGREDVVDLLRFCLERGYQLRVIEQMPLDAGHSWRRNIALSADDVLAALRPHFRLRPDPAPRGSAPAELWLVDAGPNTPRGRFGVIASVSHAFCSTCDRTRLTADGQIRSCLFSTEETDLRRLLRGGADDDAIEAAWRAAMWSKPAGHGINAPDFIQPDRPMSAIGG.

The 227-residue stretch at 33 to 259 folds into the Radical SAM core domain; that stretch reads TFGRVANDLR…PDPAPRGSAP (227 aa). Arginine 42 lines the GTP pocket. [4Fe-4S] cluster contacts are provided by cysteine 49 and cysteine 53. Tyrosine 55 contributes to the S-adenosyl-L-methionine binding site. [4Fe-4S] cluster is bound at residue cysteine 56. Arginine 93 contacts GTP. Position 97 (glycine 97) interacts with S-adenosyl-L-methionine. Residue threonine 124 coordinates GTP. Position 148 (serine 148) interacts with S-adenosyl-L-methionine. Lysine 185 is a GTP binding site. S-adenosyl-L-methionine is bound at residue methionine 219. [4Fe-4S] cluster-binding residues include cysteine 287 and cysteine 290. A GTP-binding site is contributed by 292–294; the sequence is RTR. Cysteine 304 is a [4Fe-4S] cluster binding site.

It belongs to the radical SAM superfamily. MoaA family. In terms of assembly, monomer and homodimer. [4Fe-4S] cluster serves as cofactor.

It carries out the reaction GTP + AH2 + S-adenosyl-L-methionine = (8S)-3',8-cyclo-7,8-dihydroguanosine 5'-triphosphate + 5'-deoxyadenosine + L-methionine + A + H(+). It participates in cofactor biosynthesis; molybdopterin biosynthesis. Functionally, catalyzes the cyclization of GTP to (8S)-3',8-cyclo-7,8-dihydroguanosine 5'-triphosphate. This Mycobacterium bovis (strain ATCC BAA-935 / AF2122/97) protein is GTP 3',8-cyclase 2.